A 59-amino-acid polypeptide reads, in one-letter code: Large ribosomal subunit protein bL32 (59 aa).

A compositionally biased stretch (basic residues) spans 1–16 (MAVPKRKTSPSKRGMR). Residues 1–59 (MAVPKRKTSPSKRGMRRSADALKAPTYVEDKNSGELRRPHHIDLKSGMYRGRQVLEAKE) are disordered. The span at 28 to 44 (VEDKNSGELRRPHHIDL) shows a compositional bias: basic and acidic residues.

This sequence belongs to the bacterial ribosomal protein bL32 family.

The protein is Large ribosomal subunit protein bL32 of Brucella anthropi (strain ATCC 49188 / DSM 6882 / CCUG 24695 / JCM 21032 / LMG 3331 / NBRC 15819 / NCTC 12168 / Alc 37) (Ochrobactrum anthropi).